The following is a 405-amino-acid chain: Multifunctional CCA protein (405 aa).

The ATP site is built by G8 and R11. Positions 8 and 11 each coordinate CTP. Residues D21 and D23 each coordinate Mg(2+). Residues R91, R137, and R140 each coordinate ATP. CTP-binding residues include R91, R137, and R140. The HD domain maps to 225-326; sequence TGVHAMLVLD…LRLLRECDAL (102 aa).

This sequence belongs to the tRNA nucleotidyltransferase/poly(A) polymerase family. Bacterial CCA-adding enzyme type 1 subfamily. Monomer. Can also form homodimers and oligomers. It depends on Mg(2+) as a cofactor. The cofactor is Ni(2+).

The catalysed reaction is a tRNA precursor + 2 CTP + ATP = a tRNA with a 3' CCA end + 3 diphosphate. It carries out the reaction a tRNA with a 3' CCA end + 2 CTP + ATP = a tRNA with a 3' CCACCA end + 3 diphosphate. Functionally, catalyzes the addition and repair of the essential 3'-terminal CCA sequence in tRNAs without using a nucleic acid template. Adds these three nucleotides in the order of C, C, and A to the tRNA nucleotide-73, using CTP and ATP as substrates and producing inorganic pyrophosphate. tRNA 3'-terminal CCA addition is required both for tRNA processing and repair. Also involved in tRNA surveillance by mediating tandem CCA addition to generate a CCACCA at the 3' terminus of unstable tRNAs. While stable tRNAs receive only 3'-terminal CCA, unstable tRNAs are marked with CCACCA and rapidly degraded. In Laribacter hongkongensis (strain HLHK9), this protein is Multifunctional CCA protein.